A 319-amino-acid polypeptide reads, in one-letter code: MKRSTILGIGSYLPKKIVTNDELALTVETSDEWIVKRTGIKQRHIAENNEMTSDMAANAARLALTDACVHKDDIGLIIVATTTPDRTFPSCATIVQDKLECKNAFAFDIQAVCSGFVYAISIADNFIKSGQVNTALVIGAEIMSRILDWQDRSTCVLFGDGAGAVVLGNNSEKDSGIISTILHSDGAFCDLLYTTGGTAYNGHAGTICMNGTIVFEHAIEKLSASILEILDQNDLEINDVDWFVLHQANIRIIELVARRLKIPYEKMVVSVNWHGNTSAASIPLALSYAKSSGKLKKHDIAILAAIGGGFTWGTCLVRI.

Catalysis depends on residues Cys-113 and His-246. The interval 247–251 is ACP-binding; that stretch reads QANIR. Residue Asn-276 is part of the active site.

It belongs to the thiolase-like superfamily. FabH family. As to quaternary structure, homodimer.

The protein localises to the cytoplasm. The catalysed reaction is malonyl-[ACP] + acetyl-CoA + H(+) = 3-oxobutanoyl-[ACP] + CO2 + CoA. It participates in lipid metabolism; fatty acid biosynthesis. In terms of biological role, catalyzes the condensation reaction of fatty acid synthesis by the addition to an acyl acceptor of two carbons from malonyl-ACP. Catalyzes the first condensation reaction which initiates fatty acid synthesis and may therefore play a role in governing the total rate of fatty acid production. Possesses both acetoacetyl-ACP synthase and acetyl transacylase activities. Its substrate specificity determines the biosynthesis of branched-chain and/or straight-chain of fatty acids. The sequence is that of Beta-ketoacyl-[acyl-carrier-protein] synthase III from Ehrlichia chaffeensis (strain ATCC CRL-10679 / Arkansas).